The primary structure comprises 136 residues: Classical arabinogalactan protein 26 (136 aa).

A signal peptide spans 1 to 21 (MSVSLFTAFTVLSLCLHTSTS). The disordered stretch occupies residues 38–95 (APSSFSASTPAMSPDTSPLFPTPGSSEMSPSPSESSIMPTIPSSLSPPNPDAVTPDPL). The span at 40-53 (SSFSASTPAMSPDT) shows a compositional bias: polar residues. Over residues 59-81 (TPGSSEMSPSPSESSIMPTIPSS) the composition is skewed to low complexity. The GPI-anchor amidated serine moiety is linked to residue S108. The propeptide at 109–136 (SSVCLVSSQLSSLLLVLLMLLLAFCSFF) is removed in mature form.

The protein belongs to the classical AGP family. O-glycosylated on the hydroxyproline residues.

The protein localises to the cell membrane. Its function is as follows. Proteoglycan that seems to be implicated in diverse developmental roles such as differentiation, cell-cell recognition, embryogenesis and programmed cell death. This chain is Classical arabinogalactan protein 26 (AGP26), found in Arabidopsis thaliana (Mouse-ear cress).